The sequence spans 632 residues: Probable membrane transporter protein MamO (632 aa).

The chain crosses the membrane as a helical span at residues 25–45; that stretch reads APVSILAFLILVTFAWGAYLL. Positions 78-268 are protease-like; the sequence is LYYTVPPAVV…VIVSHLQDVV (191 aa). Histidine 148 and histidine 263 together coordinate a divalent metal cation. 7 helical membrane-spanning segments follow: residues 340 to 360, 412 to 432, 434 to 454, 513 to 533, 550 to 570, 582 to 602, and 612 to 632; these read IGGYSIADILGLGMLALAAGV, LVQWDKVKPLIPWGVAGVVIG, FIGNAIGDSVVGVLLGLFALI, AVLGLPMGLFSGILGISGGVI, IANSSVLVFWASVAGSVVAFI, APVTLALVMIPGAYVGGILGA, and VLKGIYAATMAAIAIKMLTTV. The TSUP-like stretch occupies residues 365–632; it reads MTMGGGVLQV…AIAIKMLTTV (268 aa).

This sequence in the N-terminal section; belongs to the peptidase S1C family. The protein in the C-terminal section; belongs to the 4-toluene sulfonate uptake permease (TSUP) (TC 2.A.102) family. A metal cation serves as cofactor. Post-translationally, subject to proteolytic cleavage by MamE.

The protein resides in the magnetosome membrane. Functionally, plays 2 roles; promotes magnetite nucleation/formation and activates the MamE protease. Despite its near conservation of a protease-like sequence, this is probably not a protease. Required in conjunction with MamP for proteolysis of at least MamE, itself and MamP. May transport a solute that controls MamE's protease activity. May place individual iron atoms into the magnetite lattice. One of 7 genes (mamLQBIEMO) able to induce magnetosome membrane biogenesis; coexpression of mamLQRBIEMO in a deletion of the 17 gene mamAB operon restores magnetosome vesicle formation but not magnetite biosynthesis. The polypeptide is Probable membrane transporter protein MamO (Magnetospirillum gryphiswaldense (strain DSM 6361 / JCM 21280 / NBRC 15271 / MSR-1)).